Here is a 788-residue protein sequence, read N- to C-terminus: Pyridoxal-dependent decarboxylase domain-containing protein 1 (788 aa).

Over residues 28–40 (EDSQRRTEEENGK) the composition is skewed to basic and acidic residues. A disordered region spans residues 28-51 (EDSQRRTEEENGKKLISGDIPGPL). Residue Thr414 is modified to Phosphothreonine. Residue Ser652 is modified to Phosphoserine. The segment at 684–788 (AGVTLPPTPS…SQVEGPESLR (105 aa)) is disordered. 2 positions are modified to phosphothreonine: Thr687 and Thr691. A phosphoserine mark is found at Ser710, Ser718, and Ser722. Residues 725 to 734 (HIEDLEKVER) show a composition bias toward basic and acidic residues. A compositionally biased stretch (polar residues) spans 738–750 (GPEQITLEASSTE). Phosphoserine occurs at positions 748, 757, 779, and 786. The segment covering 772–788 (PHPEDDHSQVEGPESLR) has biased composition (basic and acidic residues).

Belongs to the group II decarboxylase family. Requires pyridoxal 5'-phosphate as cofactor.

The polypeptide is Pyridoxal-dependent decarboxylase domain-containing protein 1 (PDXDC1) (Homo sapiens (Human)).